The chain runs to 143 residues: Transcriptional regulator MraZ (143 aa).

2 consecutive SpoVT-AbrB domains span residues 5–47 (EYQH…PMHE) and 76–119 (ATEC…SKVI).

This sequence belongs to the MraZ family. As to quaternary structure, forms oligomers.

It localises to the cytoplasm. The protein resides in the nucleoid. The chain is Transcriptional regulator MraZ from Bacillus subtilis (strain 168).